The chain runs to 229 residues: Heptaprenylglyceryl phosphate synthase (229 aa).

Position 12 (lysine 12) interacts with sn-glycerol 1-phosphate. Mg(2+) contacts are provided by aspartate 14 and threonine 40. Sn-glycerol 1-phosphate is bound by residues 159–164 (YIEYSG), glycine 189, and 209–210 (GN).

The protein belongs to the GGGP/HepGP synthase family. Group I subfamily. As to quaternary structure, homodimer. Mg(2+) is required as a cofactor.

It catalyses the reaction sn-glycerol 1-phosphate + all-trans-heptaprenyl diphosphate = 3-heptaprenyl-sn-glycero-1-phosphate + diphosphate. It participates in membrane lipid metabolism; glycerophospholipid metabolism. In terms of biological role, prenyltransferase that catalyzes in vivo the transfer of the heptaprenyl moiety of heptaprenyl pyrophosphate (HepPP; 35 carbon atoms) to the C3 hydroxyl of sn-glycerol-1-phosphate (G1P), producing heptaprenylglyceryl phosphate (HepGP). This reaction is an ether-bond-formation step in the biosynthesis of archaea-type G1P-based membrane lipids found in Bacillales. This is Heptaprenylglyceryl phosphate synthase from Staphylococcus carnosus (strain TM300).